The sequence spans 186 residues: Ribosome maturation factor RimP (186 aa).

The protein belongs to the RimP family.

It localises to the cytoplasm. Its function is as follows. Required for maturation of 30S ribosomal subunits. The protein is Ribosome maturation factor RimP of Rhizorhabdus wittichii (strain DSM 6014 / CCUG 31198 / JCM 15750 / NBRC 105917 / EY 4224 / RW1) (Sphingomonas wittichii).